A 413-amino-acid polypeptide reads, in one-letter code: NPL4-like protein 1 (413 aa).

S104 bears the Phosphoserine mark. The MPN domain maps to 131–272 (SVSFDRDCAN…ADVHFEPFQM (142 aa)).

It belongs to the NPL4 family.

The protein operates within protein degradation; proteasomal ubiquitin-dependent pathway. May be part of a complex that binds ubiquitinated proteins and that is necessary for the export of misfolded proteins from the ER to the cytoplasm, where they are degraded by the proteasome. This is NPL4-like protein 1 from Arabidopsis thaliana (Mouse-ear cress).